Reading from the N-terminus, the 225-residue chain is Ribosomal RNA small subunit methyltransferase G (225 aa).

S-adenosyl-L-methionine is bound by residues glycine 71, leucine 76, 121 to 122, and arginine 139; that span reads AE. A disordered region spans residues 204–225; sequence VVEARRATPSNGRGRPGRSSRR.

It belongs to the methyltransferase superfamily. RNA methyltransferase RsmG family.

The protein localises to the cytoplasm. In terms of biological role, specifically methylates the N7 position of guanine in position 518 of 16S rRNA. This is Ribosomal RNA small subunit methyltransferase G from Mycobacterium sp. (strain KMS).